Consider the following 476-residue polypeptide: Bifunctional protein GlmU (476 aa).

A pyrophosphorylase region spans residues Met-1–Arg-232. Residues Leu-9–Gly-12, Lys-23, Gln-75, and Gly-80–Thr-81 each bind UDP-N-acetyl-alpha-D-glucosamine. Position 105 (Asp-105) interacts with Mg(2+). Positions 142, 157, 172, and 230 each coordinate UDP-N-acetyl-alpha-D-glucosamine. Asn-230 contacts Mg(2+). The tract at residues Ala-233–Asp-253 is linker. Residues Gly-254–Gln-476 are N-acetyltransferase. The UDP-N-acetyl-alpha-D-glucosamine site is built by Arg-353 and Lys-371. The Proton acceptor role is filled by His-383. UDP-N-acetyl-alpha-D-glucosamine-binding residues include Tyr-386 and Asn-397. Acetyl-CoA-binding positions include Asn-406–Tyr-407, Ser-425, Ala-443, and Arg-460.

This sequence in the N-terminal section; belongs to the N-acetylglucosamine-1-phosphate uridyltransferase family. In the C-terminal section; belongs to the transferase hexapeptide repeat family. As to quaternary structure, homotrimer. Mg(2+) is required as a cofactor.

Its subcellular location is the cytoplasm. It carries out the reaction alpha-D-glucosamine 1-phosphate + acetyl-CoA = N-acetyl-alpha-D-glucosamine 1-phosphate + CoA + H(+). It catalyses the reaction N-acetyl-alpha-D-glucosamine 1-phosphate + UTP + H(+) = UDP-N-acetyl-alpha-D-glucosamine + diphosphate. It functions in the pathway nucleotide-sugar biosynthesis; UDP-N-acetyl-alpha-D-glucosamine biosynthesis; N-acetyl-alpha-D-glucosamine 1-phosphate from alpha-D-glucosamine 6-phosphate (route II): step 2/2. Its pathway is nucleotide-sugar biosynthesis; UDP-N-acetyl-alpha-D-glucosamine biosynthesis; UDP-N-acetyl-alpha-D-glucosamine from N-acetyl-alpha-D-glucosamine 1-phosphate: step 1/1. The protein operates within bacterial outer membrane biogenesis; LPS lipid A biosynthesis. Its function is as follows. Catalyzes the last two sequential reactions in the de novo biosynthetic pathway for UDP-N-acetylglucosamine (UDP-GlcNAc). The C-terminal domain catalyzes the transfer of acetyl group from acetyl coenzyme A to glucosamine-1-phosphate (GlcN-1-P) to produce N-acetylglucosamine-1-phosphate (GlcNAc-1-P), which is converted into UDP-GlcNAc by the transfer of uridine 5-monophosphate (from uridine 5-triphosphate), a reaction catalyzed by the N-terminal domain. This Geobacter metallireducens (strain ATCC 53774 / DSM 7210 / GS-15) protein is Bifunctional protein GlmU.